The chain runs to 406 residues: Ubiquitin-like modifier-activating enzyme 5 (406 aa).

ATP contacts are provided by Gly-82, Asp-103, Lys-126, Asn-149, and Asn-183. Zn(2+)-binding residues include Cys-225 and Cys-228. Residue Cys-249 is the Glycyl thioester intermediate of the active site. Residues Cys-302 and Cys-307 each coordinate Zn(2+). Residues 373 to 397 (EAPSKSTETTSEATTTTTGDETSLD) form a disordered region. Residues 378 to 393 (STETTSEATTTTTGDE) show a composition bias toward low complexity.

It belongs to the ubiquitin-activating E1 family. UBA5 subfamily.

E1-like enzyme which activates UFM1. The protein is Ubiquitin-like modifier-activating enzyme 5 of Drosophila willistoni (Fruit fly).